The primary structure comprises 321 residues: Glucokinase (321 aa).

8–13 (GDVGGT) contacts ATP.

Belongs to the bacterial glucokinase family.

It is found in the cytoplasm. It catalyses the reaction D-glucose + ATP = D-glucose 6-phosphate + ADP + H(+). The sequence is that of Glucokinase from Escherichia coli (strain SMS-3-5 / SECEC).